Here is a 160-residue protein sequence, read N- to C-terminus: 2-C-methyl-D-erythritol 2,4-cyclodiphosphate synthase (160 aa).

A divalent metal cation-binding residues include D10 and H12. 4-CDP-2-C-methyl-D-erythritol 2-phosphate contacts are provided by residues 10 to 12 and 36 to 37; these read DVH and HS. H44 contacts a divalent metal cation. Residues 58 to 60, 63 to 67, 102 to 108, 134 to 137, F141, and R144 contribute to the 4-CDP-2-C-methyl-D-erythritol 2-phosphate site; these read DIG, FPDTD, AQAPKMA, and TTTE.

The protein belongs to the IspF family. In terms of assembly, homotrimer. A divalent metal cation serves as cofactor.

The catalysed reaction is 4-CDP-2-C-methyl-D-erythritol 2-phosphate = 2-C-methyl-D-erythritol 2,4-cyclic diphosphate + CMP. Its pathway is isoprenoid biosynthesis; isopentenyl diphosphate biosynthesis via DXP pathway; isopentenyl diphosphate from 1-deoxy-D-xylulose 5-phosphate: step 4/6. Functionally, involved in the biosynthesis of isopentenyl diphosphate (IPP) and dimethylallyl diphosphate (DMAPP), two major building blocks of isoprenoid compounds. Catalyzes the conversion of 4-diphosphocytidyl-2-C-methyl-D-erythritol 2-phosphate (CDP-ME2P) to 2-C-methyl-D-erythritol 2,4-cyclodiphosphate (ME-CPP) with a corresponding release of cytidine 5-monophosphate (CMP). This is 2-C-methyl-D-erythritol 2,4-cyclodiphosphate synthase from Shewanella denitrificans (strain OS217 / ATCC BAA-1090 / DSM 15013).